The chain runs to 504 residues: Apolipoprotein N-acyltransferase (504 aa).

The next 6 helical transmembrane spans lie at 6–26 (LALT…YALV), 47–67 (ALYG…WVFV), 83–103 (LTAL…WLGV), 105–125 (AGGG…WVVT), 153–173 (IAPV…AGLL), and 186–206 (FALL…KVQW). In terms of domain architecture, CN hydrolase spans 219–457 (LQGNVPQDQK…REALTGMMQP (239 aa)). Glutamate 258 functions as the Proton acceptor in the catalytic mechanism. Residue lysine 317 is part of the active site. Cysteine 369 functions as the Nucleophile in the catalytic mechanism. Residues 465-485 (ALWGDWPAIGLCAGIVGICFA) traverse the membrane as a helical segment.

Belongs to the CN hydrolase family. Apolipoprotein N-acyltransferase subfamily.

The protein localises to the cell inner membrane. The enzyme catalyses N-terminal S-1,2-diacyl-sn-glyceryl-L-cysteinyl-[lipoprotein] + a glycerophospholipid = N-acyl-S-1,2-diacyl-sn-glyceryl-L-cysteinyl-[lipoprotein] + a 2-acyl-sn-glycero-3-phospholipid + H(+). It participates in protein modification; lipoprotein biosynthesis (N-acyl transfer). Its function is as follows. Catalyzes the phospholipid dependent N-acylation of the N-terminal cysteine of apolipoprotein, the last step in lipoprotein maturation. The chain is Apolipoprotein N-acyltransferase from Methylococcus capsulatus (strain ATCC 33009 / NCIMB 11132 / Bath).